Consider the following 367-residue polypeptide: Quinolinate synthase (367 aa).

Residues H45 and S62 each contribute to the iminosuccinate site. Residue C109 participates in [4Fe-4S] cluster binding. Residues 140–142 and S161 each bind iminosuccinate; that span reads YVN. Residue C229 participates in [4Fe-4S] cluster binding. Iminosuccinate is bound by residues 255–257 and T272; that span reads HPE. Residue C319 coordinates [4Fe-4S] cluster.

Belongs to the quinolinate synthase family. Type 3 subfamily. It depends on [4Fe-4S] cluster as a cofactor.

Its subcellular location is the cytoplasm. The enzyme catalyses iminosuccinate + dihydroxyacetone phosphate = quinolinate + phosphate + 2 H2O + H(+). It participates in cofactor biosynthesis; NAD(+) biosynthesis; quinolinate from iminoaspartate: step 1/1. Catalyzes the condensation of iminoaspartate with dihydroxyacetone phosphate to form quinolinate. The chain is Quinolinate synthase from Anoxybacillus flavithermus (strain DSM 21510 / WK1).